The following is a 594-amino-acid chain: Dictomallein-4 (594 aa).

The signal sequence occupies residues 1 to 18; it reads MKLVLIFLIINFLLIINC. The Peptidase M66 domain maps to 147–408; sequence PDVSQDYTLK…QNYFKNSIYY (262 aa). Histidine 300 serves as a coordination point for Zn(2+). The active site involves glutamate 301. Residues histidine 304 and histidine 310 each coordinate Zn(2+).

The protein belongs to the dictomallein family. Zn(2+) serves as cofactor.

The protein resides in the secreted. The protein is Dictomallein-4 (dtmlD) of Dictyostelium discoideum (Social amoeba).